We begin with the raw amino-acid sequence, 269 residues long: Ubiquinone/menaquinone biosynthesis C-methyltransferase UbiE (269 aa).

Residues threonine 92, aspartate 113, and 141-142 (NA) contribute to the S-adenosyl-L-methionine site.

Belongs to the class I-like SAM-binding methyltransferase superfamily. MenG/UbiE family.

It carries out the reaction a 2-demethylmenaquinol + S-adenosyl-L-methionine = a menaquinol + S-adenosyl-L-homocysteine + H(+). The enzyme catalyses a 2-methoxy-6-(all-trans-polyprenyl)benzene-1,4-diol + S-adenosyl-L-methionine = a 5-methoxy-2-methyl-3-(all-trans-polyprenyl)benzene-1,4-diol + S-adenosyl-L-homocysteine + H(+). The protein operates within quinol/quinone metabolism; menaquinone biosynthesis; menaquinol from 1,4-dihydroxy-2-naphthoate: step 2/2. Its pathway is cofactor biosynthesis; ubiquinone biosynthesis. Methyltransferase required for the conversion of demethylmenaquinol (DMKH2) to menaquinol (MKH2) and the conversion of 2-polyprenyl-6-methoxy-1,4-benzoquinol (DDMQH2) to 2-polyprenyl-3-methyl-6-methoxy-1,4-benzoquinol (DMQH2). This Brucella melitensis biotype 2 (strain ATCC 23457) protein is Ubiquinone/menaquinone biosynthesis C-methyltransferase UbiE.